The primary structure comprises 283 residues: Bifunctional protein FolD 2 (283 aa).

Residues 165–167, Ser190, and Ile231 contribute to the NADP(+) site; that span reads GAS.

The protein belongs to the tetrahydrofolate dehydrogenase/cyclohydrolase family. In terms of assembly, homodimer.

It carries out the reaction (6R)-5,10-methylene-5,6,7,8-tetrahydrofolate + NADP(+) = (6R)-5,10-methenyltetrahydrofolate + NADPH. The catalysed reaction is (6R)-5,10-methenyltetrahydrofolate + H2O = (6R)-10-formyltetrahydrofolate + H(+). The protein operates within one-carbon metabolism; tetrahydrofolate interconversion. Catalyzes the oxidation of 5,10-methylenetetrahydrofolate to 5,10-methenyltetrahydrofolate and then the hydrolysis of 5,10-methenyltetrahydrofolate to 10-formyltetrahydrofolate. The protein is Bifunctional protein FolD 2 of Bordetella pertussis (strain Tohama I / ATCC BAA-589 / NCTC 13251).